Consider the following 414-residue polypeptide: Tryptophan synthase beta chain (414 aa).

The tract at residues 1 to 26 is disordered; it reads MVSTFSRKNQNYKKDDLNQPSKDGRF. Residues 12-26 show a composition bias toward basic and acidic residues; it reads YKKDDLNQPSKDGRF. Position 109 is an N6-(pyridoxal phosphate)lysine (Lys109).

Belongs to the TrpB family. As to quaternary structure, tetramer of two alpha and two beta chains. The cofactor is pyridoxal 5'-phosphate.

The catalysed reaction is (1S,2R)-1-C-(indol-3-yl)glycerol 3-phosphate + L-serine = D-glyceraldehyde 3-phosphate + L-tryptophan + H2O. Its pathway is amino-acid biosynthesis; L-tryptophan biosynthesis; L-tryptophan from chorismate: step 5/5. The beta subunit is responsible for the synthesis of L-tryptophan from indole and L-serine. This Prochlorococcus marinus (strain MIT 9215) protein is Tryptophan synthase beta chain.